A 195-amino-acid chain; its full sequence is MIISLTGGIGVGKSFVANCFQEFGAVVFDADSVVHQLYKVDKSIISYAEKNFPGVVVNGEIDRTVLSKYFLAYDENWKQFQSLVHSAVLRELEFFIAKEKKIDRKLLVLDVPLLLETKFYLYCDLIVFVHADSVVQAQRLNERNIDKEKLNLISDVQLSIEEKRKMSDFIIDTSVSKEYVFSQVKDIVDSLNLNT.

A DPCK domain is found at 2-195 (IISLTGGIGV…DIVDSLNLNT (194 aa)). 10-15 (GVGKSF) is a binding site for ATP.

The protein belongs to the CoaE family.

Its subcellular location is the cytoplasm. It catalyses the reaction 3'-dephospho-CoA + ATP = ADP + CoA + H(+). It participates in cofactor biosynthesis; coenzyme A biosynthesis; CoA from (R)-pantothenate: step 5/5. Its function is as follows. Catalyzes the phosphorylation of the 3'-hydroxyl group of dephosphocoenzyme A to form coenzyme A. In Wolbachia pipientis wMel, this protein is Dephospho-CoA kinase.